Consider the following 461-residue polypeptide: UDP-N-acetylmuramoylalanine--D-glutamate ligase (461 aa).

An ATP-binding site is contributed by 117–123 (GTNGKTT).

This sequence belongs to the MurCDEF family.

It is found in the cytoplasm. The enzyme catalyses UDP-N-acetyl-alpha-D-muramoyl-L-alanine + D-glutamate + ATP = UDP-N-acetyl-alpha-D-muramoyl-L-alanyl-D-glutamate + ADP + phosphate + H(+). The protein operates within cell wall biogenesis; peptidoglycan biosynthesis. Its function is as follows. Cell wall formation. Catalyzes the addition of glutamate to the nucleotide precursor UDP-N-acetylmuramoyl-L-alanine (UMA). The polypeptide is UDP-N-acetylmuramoylalanine--D-glutamate ligase (Synechococcus sp. (strain CC9605)).